The chain runs to 472 residues: Alanine--anticapsin ligase (472 aa).

Glu-109 is a Mg(2+) binding site. ATP is bound by residues Lys-138 and Lys-178. The 214-residue stretch at 142–355 (RAAFNRAGVK…MAQLLLDVLC (214 aa)) folds into the ATP-grasp domain. Position 182 (Leu-182) interacts with Mg(2+). ATP contacts are provided by residues 184–185 (SS), 226–229 (EEFL), and Gln-268. Substrate contacts are provided by residues Glu-273 and 309 to 311 (HTE). The Mg(2+) site is built by Glu-311 and Glu-324. 328–331 (RFAG) lines the substrate pocket.

As to quaternary structure, monomer or homodimer. It depends on Mg(2+) as a cofactor.

The enzyme catalyses L-anticapsin + L-alanine + ATP = bacilysin + ADP + phosphate + H(+). The protein operates within antibiotic biosynthesis; bacilysin biosynthesis. Part of the bacABCDEFG operon responsible for the biosynthesis of bacilysin, an irreversible inactivator of the glutaminase domain of glucosamine synthetase. Catalyzes the formation of alpha-dipeptides from various L-amino acids in the presence of ATP. In vivo catalyzes the ligation of L-alanine and L-anticapsin (epoxycyclohexanonyl-Ala) to produce the final bacilysin antibiotic (L-Ala-L-4S-cyclohexenonyl-Ala dipeptide). In Bacillus subtilis, this protein is Alanine--anticapsin ligase.